The primary structure comprises 205 residues: Small ribosomal subunit protein uS4 (205 aa).

Positions 18-46 are disordered; sequence NIWGRPKSPVNRREYGPGQHGQRRKGKLS. In terms of domain architecture, S4 RNA-binding spans 94–154; the sequence is RRLDAVVYRA…EASKQLAHVL (61 aa).

The protein belongs to the universal ribosomal protein uS4 family. In terms of assembly, part of the 30S ribosomal subunit. Contacts protein S5. The interaction surface between S4 and S5 is involved in control of translational fidelity.

In terms of biological role, one of the primary rRNA binding proteins, it binds directly to 16S rRNA where it nucleates assembly of the body of the 30S subunit. With S5 and S12 plays an important role in translational accuracy. The sequence is that of Small ribosomal subunit protein uS4 from Bradyrhizobium diazoefficiens (strain JCM 10833 / BCRC 13528 / IAM 13628 / NBRC 14792 / USDA 110).